The chain runs to 45 residues: Mu-conotoxin-like Cal 12.1.2e (45 aa).

Intrachain disulfides connect Cys3-Cys16, Cys11-Cys28, Cys18-Cys33, and Cys27-Cys39. 6'-bromotryptophan is present on Trp17. At Pro23 the chain carries 4-hydroxyproline. Trp38 is modified (6'-bromotryptophan). Pro40 bears the 4-hydroxyproline mark.

In terms of tissue distribution, expressed by the venom duct.

It is found in the secreted. Mu-conotoxins block voltage-gated sodium channels. This toxin reversibly blocks voltage-gated sodium channel in cephalopods, with no alteration in the voltage dependence of sodium conductance or on the kinetics of inactivation. In Californiconus californicus (California cone), this protein is Mu-conotoxin-like Cal 12.1.2e.